Reading from the N-terminus, the 235-residue chain is Transcriptional regulatory protein MalR (235 aa).

The Response regulatory domain occupies 3–119; that stretch reads NVLIVEDDPM…RFQTALSDYR (117 aa). Position 54 is a 4-aspartylphosphate (D54). The segment at residues 178–197 is a DNA-binding region (H-T-H motif); that stretch reads TEDLAKHTEISQVSIRKYLK.

In terms of processing, phosphorylated and activated by MalK.

It localises to the cytoplasm. Member of a two-component regulatory system MalK/MalR. Activates transcription of maeA, maeN and yflS in presence of malate by binding to their promoter region. The chain is Transcriptional regulatory protein MalR (malR) from Bacillus subtilis (strain 168).